Reading from the N-terminus, the 376-residue chain is Fructose-1,6-bisphosphate aldolase/phosphatase (376 aa).

D11 functions as the Proton acceptor; for FBP phosphatase activity in the catalytic mechanism. Residues D11, H18, D49, and D50 each coordinate Mg(2+). Residue H18 coordinates beta-D-fructose 1,6-bisphosphate. H18 is a dihydroxyacetone phosphate binding site. Position 87 (Y87) interacts with beta-D-fructose 1,6-bisphosphate. Q91 serves as a coordination point for Mg(2+). Position 100-101 (100-101 (GN)) interacts with beta-D-fructose 1,6-bisphosphate. Position 128 (D128) interacts with Mg(2+). Beta-D-fructose 1,6-bisphosphate is bound at residue K129. K129 contacts dihydroxyacetone phosphate. Y224 (proton donor/acceptor; for FBP aldolase activity) is an active-site residue. Residues K227, D228, and D229 each contribute to the Mg(2+) site. The Schiff-base intermediate with DHAP; for FBP aldolase activity role is filled by K227. Residues 237 to 238 (QK), R261, and Y342 each bind beta-D-fructose 1,6-bisphosphate. R261 provides a ligand contact to dihydroxyacetone phosphate. Residues 357–376 (MVPLKDSGPAGTGRAYEDPD) form a disordered region.

It belongs to the FBP aldolase/phosphatase family. Homooctamer; dimer of tetramers. It depends on Mg(2+) as a cofactor.

It carries out the reaction beta-D-fructose 1,6-bisphosphate + H2O = beta-D-fructose 6-phosphate + phosphate. It catalyses the reaction beta-D-fructose 1,6-bisphosphate = D-glyceraldehyde 3-phosphate + dihydroxyacetone phosphate. Its pathway is carbohydrate biosynthesis; gluconeogenesis. Functionally, catalyzes two subsequent steps in gluconeogenesis: the aldol condensation of dihydroxyacetone phosphate (DHAP) and glyceraldehyde-3-phosphate (GA3P) to fructose-1,6-bisphosphate (FBP), and the dephosphorylation of FBP to fructose-6-phosphate (F6P). This chain is Fructose-1,6-bisphosphate aldolase/phosphatase, found in Cenarchaeum symbiosum (strain A).